Reading from the N-terminus, the 345-residue chain is Histone H3-like centromeric protein cpar-1 (345 aa).

Residues 117-246 (NHSNRKPLEE…SRVTKTHNRK (130 aa)) are disordered. Positions 122–149 (KPLEESRRREEPRDRVHESNIDITHRGD) are enriched in basic and acidic residues. A compositionally biased stretch (basic residues) spans 233–246 (RSGKSRVTKTHNRK). The H3-like stretch occupies residues 263–340 (STDMLIQKAP…TDIQLYRRLC (78 aa)).

Belongs to the histone H3 family. In terms of assembly, forms a nucleosome-like histone octamer containing two molecules each of H2A, H2B, cpar-1 and H4 assembled in one cpar-1-H4 heterotetramer and two H2A-H2B heterodimers. Post-translationally, cleaved at the onset of meiotic anaphase I, likely by separase sep-1.

The protein resides in the nucleus. It localises to the chromosome. Its function is as follows. Histone H3-like variant which exclusively replaces conventional H3 in the nucleosome core of centromeric chromatin at the inner plate of the kinetochore. Required for recruitment and assembly of kinetochore proteins, mitotic progression and chromosome segregation. May serve as an epigenetic mark that propagates centromere identity through replication and cell division. Not required for chromosome segregation during meiosis. This is Histone H3-like centromeric protein cpar-1 from Caenorhabditis briggsae.